The primary structure comprises 584 residues: A-type ATP synthase subunit A (584 aa).

Residue 233–240 coordinates ATP; sequence GPFGSGKT.

Belongs to the ATPase alpha/beta chains family. Has multiple subunits with at least A(3), B(3), C, D, E, F, H, I and proteolipid K(x).

Its subcellular location is the cell membrane. It carries out the reaction ATP + H2O + 4 H(+)(in) = ADP + phosphate + 5 H(+)(out). In terms of biological role, component of the A-type ATP synthase that produces ATP from ADP in the presence of a proton gradient across the membrane. The A chain is the catalytic subunit. The protein is A-type ATP synthase subunit A of Methanobrevibacter smithii (strain ATCC 35061 / DSM 861 / OCM 144 / PS).